The chain runs to 241 residues: Fatty acid metabolism regulator protein (241 aa).

The HTH gntR-type domain occupies 11 to 79; sequence QSPAALAEEY…HGKPTKVNNI (69 aa). A DNA-binding region (H-T-H motif) is located at residues 39-58; sequence ERDLADKIGVTRTTLREVLQ.

Homodimer.

It localises to the cytoplasm. In terms of biological role, multifunctional regulator of fatty acid metabolism. This Haemophilus influenzae (strain ATCC 51907 / DSM 11121 / KW20 / Rd) protein is Fatty acid metabolism regulator protein.